A 182-amino-acid chain; its full sequence is UPF0423 protein BRA0381/BS1330_II0378 (182 aa).

The signal sequence occupies residues M1–A24.

This sequence belongs to the UPF0423 family.

The chain is UPF0423 protein BRA0381/BS1330_II0378 from Brucella suis biovar 1 (strain 1330).